The chain runs to 421 residues: Phosphatidate cytidylyltransferase 1 (421 aa).

Residue Met-1 is modified to N-acetylmethionine. Residues 1 to 12 are compositionally biased toward polar residues; it reads MEEENVTSSPST. A disordered region spans residues 1-26; that stretch reads MEEENVTSSPSTPVHRLRHRRRSNEV. The next 8 helical transmembrane spans lie at 60–80, 102–122, 149–169, 183–203, 206–226, 246–266, 321–341, and 369–389; these read IGGF…MVVV, LPYI…FVYG, YHMA…ILTL, WTHM…ANIF, IFWF…AYIF, GFIG…NILG, LCLG…ASGF, and VMAV…SVSV.

Belongs to the CDS family. Requires Mg(2+) as cofactor.

It localises to the membrane. It carries out the reaction a 1,2-diacyl-sn-glycero-3-phosphate + CTP + H(+) = a CDP-1,2-diacyl-sn-glycerol + diphosphate. The protein operates within phospholipid metabolism; CDP-diacylglycerol biosynthesis; CDP-diacylglycerol from sn-glycerol 3-phosphate: step 3/3. Its function is as follows. May be involved in the synthesis of minor phospholipids and in modulation of IP3-mediated signal transduction. The sequence is that of Phosphatidate cytidylyltransferase 1 from Arabidopsis thaliana (Mouse-ear cress).